The chain runs to 243 residues: Terpene cyclase atmB (243 aa).

7 consecutive transmembrane segments (helical) span residues 19–39 (IADVFVIGMGIGWIINYVGMV), 48–68 (YGMAIMPLCCNIAWEIVYGLI), 78–98 (GVFLSGLTINLGVIYTAIKFG), 112–132 (LPLIFMLGILGFLTGHLALAA), 134–154 (IGPALAYNWGAAFCQLLLSVG), 169–189 (SYTLWLSRFLGSFSVVISAWL), and 205–225 (LILWCLFAWLVVDGSYGVCFY).

It belongs to the paxB family.

It is found in the membrane. Terpene cyclase; part of the ATM2 gene cluster that mediates the biosynthesis of aflatrem, a tremorgenic mycotoxin with acute neurotoxic effects. Synthesis of geranylgeranyl diphosphate (GGPP) by AtmG (a GGPP synthase) precedes condensation of GGPP with indole 3-glycerol phosphate, followed by epoxidation and cyclization by AtmM (a FAD-dependent monooxygenase) and AtmC (a prenyltransferase) to produce paspaline. AtmB is also essential for paspaline production, but its exact role has not been identified yet. AtmP, a cytochrome P450 monooxygenase, subsequently converts paspaline to 13-desoxypaxilline via PC-M6 by removal of the C-30 methyl group and oxidation at C-10. AtmQ, a cytochrome P450 monooxygenase, then catalyzes the oxidation of 13-desoxypaxilline, first at C-7 to produce paspalicine and then at C-13 to form paspalinine. Finally, AtmD prenylates paspalinine to form aflatrem. This is Terpene cyclase atmB from Aspergillus flavus.